Consider the following 69-residue polypeptide: uncharacterized protein (69 aa).

A signal peptide spans 1-16; that stretch reads MKKIMLFLAMTSILSA. The N-palmitoyl cysteine moiety is linked to residue Cys17. Cys17 carries the S-diacylglycerol cysteine lipid modification.

Its subcellular location is the cell membrane. This is an uncharacterized protein from Bacillus subtilis (strain 168).